We begin with the raw amino-acid sequence, 379 residues long: Succinate--CoA ligase [ADP-forming] subunit beta (379 aa).

The ATP-grasp domain maps to 9 to 237 (RDILARYGIP…SSDEPEAEQR (229 aa)). Residues Lys45, 52–54 (GRG), Ile94, and Glu99 each bind ATP. The Mg(2+) site is built by Asn192 and Asp206. Residues Asn257 and 314–316 (GIT) contribute to the substrate site.

Belongs to the succinate/malate CoA ligase beta subunit family. Heterotetramer of two alpha and two beta subunits. Mg(2+) is required as a cofactor.

It catalyses the reaction succinate + ATP + CoA = succinyl-CoA + ADP + phosphate. The enzyme catalyses GTP + succinate + CoA = succinyl-CoA + GDP + phosphate. Its pathway is carbohydrate metabolism; tricarboxylic acid cycle; succinate from succinyl-CoA (ligase route): step 1/1. Succinyl-CoA synthetase functions in the citric acid cycle (TCA), coupling the hydrolysis of succinyl-CoA to the synthesis of either ATP or GTP and thus represents the only step of substrate-level phosphorylation in the TCA. The beta subunit provides nucleotide specificity of the enzyme and binds the substrate succinate, while the binding sites for coenzyme A and phosphate are found in the alpha subunit. The protein is Succinate--CoA ligase [ADP-forming] subunit beta of Roseiflexus sp. (strain RS-1).